Reading from the N-terminus, the 329-residue chain is NADH-quinone oxidoreductase subunit H 1 (329 aa).

8 helical membrane-spanning segments follow: residues 12 to 32 (LAKI…LVFA), 78 to 98 (WLFY…FAVI), 120 to 140 (VGLL…ALGG), 159 to 179 (LISY…LAGS), 191 to 211 (GIWF…SIAA), 242 to 262 (LFFV…TTFF), 270 to 290 (WLPP…FFIW), and 308 to 328 (WKVL…ILML).

It belongs to the complex I subunit 1 family. As to quaternary structure, NDH-1 is composed of 14 different subunits. Subunits NuoA, H, J, K, L, M, N constitute the membrane sector of the complex.

Its subcellular location is the cell inner membrane. It carries out the reaction a quinone + NADH + 5 H(+)(in) = a quinol + NAD(+) + 4 H(+)(out). Its function is as follows. NDH-1 shuttles electrons from NADH, via FMN and iron-sulfur (Fe-S) centers, to quinones in the respiratory chain. The immediate electron acceptor for the enzyme in this species is believed to be ubiquinone. Couples the redox reaction to proton translocation (for every two electrons transferred, four hydrogen ions are translocated across the cytoplasmic membrane), and thus conserves the redox energy in a proton gradient. This subunit may bind ubiquinone. The sequence is that of NADH-quinone oxidoreductase subunit H 1 from Geobacter metallireducens (strain ATCC 53774 / DSM 7210 / GS-15).